A 525-amino-acid polypeptide reads, in one-letter code: Nucleolar complex protein 4 homolog (525 aa).

A run of 3 helical transmembrane segments spans residues alanine 305 to isoleucine 325, phenylalanine 356 to alanine 376, and leucine 384 to isoleucine 404.

This sequence belongs to the CBF/MAK21 family.

The protein localises to the nucleus membrane. Its subcellular location is the nucleus. It localises to the nucleolus. In Danio rerio (Zebrafish), this protein is Nucleolar complex protein 4 homolog (noc4l).